Consider the following 189-residue polypeptide: dTTP/UTP pyrophosphatase (189 aa).

Asp-70 functions as the Proton acceptor in the catalytic mechanism. Cys-74 and Cys-79 are joined by a disulfide.

This sequence belongs to the Maf family. YhdE subfamily. Homodimer. A divalent metal cation is required as a cofactor.

Its subcellular location is the cytoplasm. It carries out the reaction dTTP + H2O = dTMP + diphosphate + H(+). It catalyses the reaction UTP + H2O = UMP + diphosphate + H(+). The enzyme catalyses CTP + H2O = CMP + diphosphate + H(+). The catalysed reaction is psi-UTP + H2O = psi-UMP + diphosphate + H(+). It carries out the reaction 5-methyl-CTP + H2O = 5-methyl-CMP + diphosphate + H(+). It catalyses the reaction 5-methyl-UTP + H2O = 5-methyl-UMP + diphosphate + H(+). Functionally, nucleoside triphosphate pyrophosphatase that hydrolyzes dTTP and UTP. Can also hydrolyze CTP and the modified nucleotides pseudo-UTP, 5-methyl-CTP (m(5)CTP) and 5-methyl-UTP (m(5)UTP). May have a dual role in cell division arrest and in preventing the incorporation of modified nucleotides into cellular nucleic acids. The protein is dTTP/UTP pyrophosphatase of Bacillus subtilis (strain 168).